The following is a 931-amino-acid chain: Aftiphilin (931 aa).

Residues 1-49 are disordered; that stretch reads MEPDIIRMYSSSPPPLDNGAEDDEEDEFGEFGGFSEVSPSGVGFVDFDT. Acidic residues predominate over residues 19-29; it reads GAEDDEEDEFG. Positions 28–31 match the WXXF motif 1 motif; the sequence is FGEF. A compositionally biased stretch (low complexity) spans 33–45; the sequence is GFSEVSPSGVGFV. Ser-151 is modified (phosphoserine). A compositionally biased stretch (polar residues) spans 371 to 381; sequence SVKTSDVNEIG. The segment at 371–454 is disordered; the sequence is SVKTSDVNEI…PFVTSTQDSM (84 aa). Residue Ser-395 is modified to Phosphoserine. The WXXF motif 2 signature appears at 433 to 436; the sequence is FGDF. A compositionally biased stretch (polar residues) spans 439–454; it reads ANGTTPPFVTSTQDSM. The WXXF motif 3 motif lies at 476-479; sequence FGEF. Disordered regions lie at residues 494-561 and 599-636; these read TESD…SSAG and WQSQ…LQEP. Residues 516 to 530 show a composition bias toward basic and acidic residues; that stretch reads GGKDSKPDSKLKNGQ. Residue Thr-613 is modified to Phosphothreonine. Low complexity predominate over residues 618 to 631; sequence SVSSAASKGAVASG. The short motif at 712-714 is the CLTCL1/Clathrin-binding element; the sequence is YQW. A clathrin-binding region spans residues 821-825; sequence LLNLD.

In terms of assembly, self-associates. Interacts with GGA1 (via GAE domain). Interacts with GGA3 (via GAE domain), AP1G1 (via GAE domain) and AP1G2 (via GAE domain). Component of the aftiphilin/p200/gamma-synergin complex, at least composed of AFTPH/aftiphilin, HEATR5B/p200a and SYNRG/gamma-synergin, which plays a role in the AP1G1/AP-1-mediated protein trafficking from early to recycling endosomes. Within the complex interacts with HEATR5B/p200a and SYNRG/gamma-synergin; the interactions are direct. Interacts with AP1G1/AP-1; the interaction is required to recruit AFTPH/aftiphilin to the perinuclear region of the cell. Interacts with CLTCL1/Clathrin.

It is found in the cytoplasm. The protein resides in the perinuclear region. The protein localises to the cytoplasmic vesicle. Its subcellular location is the clathrin-coated vesicle. Component of clathrin-coated vesicles. Component of the aftiphilin/p200/gamma-synergin complex, which plays roles in AP1G1/AP-1-mediated protein trafficking including the trafficking of transferrin from early to recycling endosomes, and the membrane trafficking of furin and the lysosomal enzyme cathepsin D between the trans-Golgi network (TGN) and endosomes. The protein is Aftiphilin (Aftph) of Mus musculus (Mouse).